A 286-amino-acid polypeptide reads, in one-letter code: D-tagatose-1,6-bisphosphate aldolase subunit KbaY (286 aa).

Residue Asp-82 is the Proton donor of the active site. 2 residues coordinate Zn(2+): His-83 and His-180. A dihydroxyacetone phosphate-binding site is contributed by Gly-181. His-208 is a Zn(2+) binding site. Dihydroxyacetone phosphate contacts are provided by residues 209–211 (GAS) and 230–233 (NVAT).

Belongs to the class II fructose-bisphosphate aldolase family. TagBP aldolase KbaY subfamily. Homotetramer. Forms a complex with KbaZ. Zn(2+) is required as a cofactor.

It carries out the reaction D-tagatofuranose 1,6-bisphosphate = D-glyceraldehyde 3-phosphate + dihydroxyacetone phosphate. The protein operates within carbohydrate metabolism; D-tagatose 6-phosphate degradation; D-glyceraldehyde 3-phosphate and glycerone phosphate from D-tagatose 6-phosphate: step 2/2. Catalytic subunit of the tagatose-1,6-bisphosphate aldolase KbaYZ, which catalyzes the reversible aldol condensation of dihydroxyacetone phosphate (DHAP or glycerone-phosphate) with glyceraldehyde 3-phosphate (G3P) to produce tagatose 1,6-bisphosphate (TBP). Requires KbaZ subunit for full activity and stability. Is involved in the catabolism of N-acetylgalactosamine and D-galactosamine. This Escherichia coli protein is D-tagatose-1,6-bisphosphate aldolase subunit KbaY (kbaY).